Here is a 321-residue protein sequence, read N- to C-terminus: N-acetyl-gamma-glutamyl-phosphate reductase (321 aa).

The active site involves cysteine 131.

Belongs to the NAGSA dehydrogenase family. Type 1 subfamily.

Its subcellular location is the cytoplasm. It catalyses the reaction N-acetyl-L-glutamate 5-semialdehyde + phosphate + NADP(+) = N-acetyl-L-glutamyl 5-phosphate + NADPH + H(+). The protein operates within amino-acid biosynthesis; L-arginine biosynthesis; N(2)-acetyl-L-ornithine from L-glutamate: step 3/4. Catalyzes the NADPH-dependent reduction of N-acetyl-5-glutamyl phosphate to yield N-acetyl-L-glutamate 5-semialdehyde. This is N-acetyl-gamma-glutamyl-phosphate reductase from Christiangramia forsetii (strain DSM 17595 / CGMCC 1.15422 / KT0803) (Gramella forsetii).